Here is a 450-residue protein sequence, read N- to C-terminus: Methylenetetrahydrofolate--tRNA-(uracil-5-)-methyltransferase TrmFO (450 aa).

9-14 (GGGMAG) contributes to the FAD binding site.

It belongs to the MnmG family. TrmFO subfamily. Requires FAD as cofactor.

The protein localises to the cytoplasm. It carries out the reaction uridine(54) in tRNA + (6R)-5,10-methylene-5,6,7,8-tetrahydrofolate + NADH + H(+) = 5-methyluridine(54) in tRNA + (6S)-5,6,7,8-tetrahydrofolate + NAD(+). The catalysed reaction is uridine(54) in tRNA + (6R)-5,10-methylene-5,6,7,8-tetrahydrofolate + NADPH + H(+) = 5-methyluridine(54) in tRNA + (6S)-5,6,7,8-tetrahydrofolate + NADP(+). Catalyzes the folate-dependent formation of 5-methyl-uridine at position 54 (M-5-U54) in all tRNAs. The polypeptide is Methylenetetrahydrofolate--tRNA-(uracil-5-)-methyltransferase TrmFO (Roseobacter denitrificans (strain ATCC 33942 / OCh 114) (Erythrobacter sp. (strain OCh 114))).